Consider the following 577-residue polypeptide: MYRFASNLASKARIAQNARQVSSRMSWSRNYAAKEIKFGVEARALMLKGVEDLADAVKVTMGPKGRNVVIEQSWGAPKVTKDGVTVAKSIEFKDKIKNVGASLVKQVANATNDVAGDGTTCATVLTRAIFAEGCKSVAAGMNAMDLRRGISMAVDAVVTNLKSKARMISTSEEIAQVGTISANGEREIGELIAKAMEKVGKEGVITIQDGKTLFNELEVVEGMKLDRGYTSPYFITNQKTQKCELDDPLILIHEKKISSINSIVKVLELALKRQRPLLIVSEDVESDALATLILNKLRAGIKVCAIKAPGFGENRKANLQDLAALTGGEVITDELGMNLEKVDLSMLGTCKKVTVSKDDTVILDGAGDKKGIEERCEQIRSAIELSTSDYDKEKLQERLAKLSGGVAVLKIGGASEAEVGEKKDRVTDALNATKAAVEEGILPGGGVALLYAARELEKLPTANFDQKIGVQIIQNALKTPVYTIASNAGVEGAVIVGKLLEQDNPDLGYDAAKGEYVDMVKAGIIDPLKVIRTALVDAASVSSLLTTTEAVVVDLPKDESESGAAGAGMGGMGGMDY.

The N-terminal 31 residues, 1–31 (MYRFASNLASKARIAQNARQVSSRMSWSRNY), are a transit peptide targeting the mitochondrion. Ser-151 bears the Phosphoserine mark.

The protein belongs to the chaperonin (HSP60) family.

The protein resides in the mitochondrion. Its function is as follows. Implicated in mitochondrial protein import and macromolecular assembly. May facilitate the correct folding of imported proteins. May also prevent misfolding and promote the refolding and proper assembly of unfolded polypeptides generated under stress conditions in the mitochondrial matrix. This is Chaperonin CPN60, mitochondrial (CPN60) from Arabidopsis thaliana (Mouse-ear cress).